The sequence spans 631 residues: Fatty acid ABC transporter ATP-binding/permease protein (631 aa).

Residues Met1–Ala11 show a composition bias toward low complexity. The interval Met1–Ser20 is disordered. Helical transmembrane passes span Ile42–Leu62, Leu123–Leu143, and Ile205–Ile225. Positions Ile42–Ser365 constitute an ABC transmembrane type-1 domain. Residues Val397–Ala631 form the ABC transporter domain. Gly430–Thr437 lines the ATP pocket.

The protein belongs to the ABC transporter superfamily. Lipid exporter (TC 3.A.1.106) family.

It localises to the cell inner membrane. ABC transporter involved in fatty acid import. Transmembrane domains (TMD) form a pore in the membrane and the ATP-binding domain (NBD) is responsible for energy generation. This chain is Fatty acid ABC transporter ATP-binding/permease protein, found in Mycobacterium bovis (strain ATCC BAA-935 / AF2122/97).